The chain runs to 327 residues: Glycerol-3-phosphate dehydrogenase [NAD(P)+] (327 aa).

NADPH is bound by residues tryptophan 16, arginine 36, and lysine 108. Sn-glycerol 3-phosphate-binding residues include lysine 108, glycine 136, and serine 138. Alanine 140 contributes to the NADPH binding site. The sn-glycerol 3-phosphate site is built by lysine 191, aspartate 244, serine 254, arginine 255, and asparagine 256. Lysine 191 (proton acceptor) is an active-site residue. Arginine 255 provides a ligand contact to NADPH. 2 residues coordinate NADPH: leucine 274 and glutamate 276.

The protein belongs to the NAD-dependent glycerol-3-phosphate dehydrogenase family.

The protein localises to the cytoplasm. It carries out the reaction sn-glycerol 3-phosphate + NAD(+) = dihydroxyacetone phosphate + NADH + H(+). The enzyme catalyses sn-glycerol 3-phosphate + NADP(+) = dihydroxyacetone phosphate + NADPH + H(+). It participates in membrane lipid metabolism; glycerophospholipid metabolism. Its function is as follows. Catalyzes the reduction of the glycolytic intermediate dihydroxyacetone phosphate (DHAP) to sn-glycerol 3-phosphate (G3P), the key precursor for phospholipid synthesis. The polypeptide is Glycerol-3-phosphate dehydrogenase [NAD(P)+] (Bradyrhizobium sp. (strain ORS 278)).